The primary structure comprises 552 residues: MSGRAVLVDVRTGEEIATAVKEYTHGVIDRELPVSKRKLPRDWALQHPADYIEVLEETIPSLLKQSKADPKEIIGIGIDFTACTILPVDENGTPLCMREEYASEPHSYVKLWKHHAAQEQANRLNQIAEERNEPFLQTYGGKISSEWLVPKVMQIAEEAPDIYDAAAEIMEAADWIVYMLCGTRKRNNCTAGYKAIWNNKSGYPSDDFFASLHPKLKNIVREKLTEDIYSVGEKAGGLTEEMAGKTGLLAGTAVAVANVDAHVSVPAVGITEPGKMLMIMGTSTCHMLLGEDVRMVPGMCGVVEDGILPGYVGYEAGQSCVGDHFHWLIQHFVPEAYLKEAEAEGISIYELLSQKAGSLQIGESGLLALDWWNGNRSTLVDADLTGMLLGMTLATKPEEIYRALVEATAYGTRIIIETFRQSGVPIEELYAAGGIAEKNPFIMQVYADVTNMEIKISGSPQAPALGSAIFGALAAGSMNGGYDHIEEAVAHMGKIKDKTYKPIPENVSLYDQLYAEYKELYTYFGKQNNVMKRLKKLKNIQSLSSDTGKAMA.

The protein belongs to the ribulokinase family.

The enzyme catalyses D-ribulose + ATP = D-ribulose 5-phosphate + ADP + H(+). It catalyses the reaction L-ribulose + ATP = L-ribulose 5-phosphate + ADP + H(+). It participates in carbohydrate degradation; L-arabinose degradation via L-ribulose; D-xylulose 5-phosphate from L-arabinose (bacterial route): step 2/3. The polypeptide is Ribulokinase (Bacillus licheniformis (strain ATCC 14580 / DSM 13 / JCM 2505 / CCUG 7422 / NBRC 12200 / NCIMB 9375 / NCTC 10341 / NRRL NRS-1264 / Gibson 46)).